Reading from the N-terminus, the 450-residue chain is 6-phospho-beta-glucosidase (450 aa).

5-73 serves as a coordination point for NAD(+); that stretch reads LKVVTIGGGS…VPMKLYKTLD (69 aa). Arg-96 and Asn-150 together coordinate substrate. Positions 172 and 203 each coordinate Mn(2+). Residue Tyr-258 is the Proton acceptor of the active site.

In terms of assembly, homotetramer. The cofactor is NAD(+). Requires Mn(2+) as cofactor. Co(2+) serves as cofactor. It depends on Ni(2+) as a cofactor.

The enzyme catalyses 6-phospho-beta-D-glucosyl-(1-&gt;4)-D-glucose + H2O = D-glucose 6-phosphate + D-glucose. In terms of biological role, hydrolyzes a wide variety of P-beta-glucosides including cellobiose-6P, salicin-6P, arbutin-6P, gentiobiose-6P, methyl-beta-glucoside-6P and p-nitrophenyl-beta-D-glucopyranoside-6P. Is also able to hydrolyze phospho-N,N'-diacetylchitobiose. In Escherichia coli (strain K12), this protein is 6-phospho-beta-glucosidase (chbF).